The primary structure comprises 489 residues: Monocarboxylate transporter 2 (489 aa).

Residues Met1 to Asp21 lie on the Cytoplasmic side of the membrane. Residues Gly22–Phe42 traverse the membrane as a helical segment. At Pro43 to Ala65 the chain is on the extracellular side. Residues Trp66 to Val86 traverse the membrane as a helical segment. The Cytoplasmic portion of the chain corresponds to Asn87–Val95. The chain crosses the membrane as a helical span at residues Ile96–Ile116. Topologically, residues Glu117–Thr121 are extracellular. A helical transmembrane segment spans residues Val122–Gly142. The Cytoplasmic portion of the chain corresponds to Lys143–Gly154. A helical transmembrane segment spans residues Phe155–Phe175. At Asn176–Gly179 the chain is on the extracellular side. The chain crosses the membrane as a helical span at residues Trp180 to Leu200. The Cytoplasmic segment spans residues Met201–Gly250. The tract at residues Pro206–Arg227 is disordered. A helical transmembrane segment spans residues Phe251–Phe271. Topologically, residues Leu272–Ser286 are extracellular. A helical membrane pass occupies residues Ala287–Ile307. Residues Ala308–Arg316 lie on the Cytoplasmic side of the membrane. The chain crosses the membrane as a helical span at residues Ile317–Leu337. Over Ala338 to Thr342 the chain is Extracellular. A helical membrane pass occupies residues Ala343–Phe363. At Glu364–Ser377 the chain is on the cytoplasmic side. Residues Ala378–Gly398 traverse the membrane as a helical segment. At Lys399–Leu410 the chain is on the extracellular side. A helical membrane pass occupies residues Tyr411–Ile431. Topologically, residues Asn432 to Ile489 are cytoplasmic. The tract at residues Lys441–Ile489 is disordered. 2 stretches are compositionally biased toward basic and acidic residues: residues Lys456–Thr470 and Pro480–Ile489.

It belongs to the major facilitator superfamily. Monocarboxylate porter (TC 2.A.1.13) family. As to quaternary structure, homodimer. Interacts with GRID2IP. Interacts with EMB; interaction mediates SLC16A7 targeting to the plasma membrane. Interacts with isoform 2 of BSG. Detected in brain and kidney (at protein level).

The protein resides in the cell membrane. It is found in the basolateral cell membrane. It localises to the cytoplasm. The catalysed reaction is 3-methyl-2-oxobutanoate(out) + H(+)(out) = 3-methyl-2-oxobutanoate(in) + H(+)(in). It carries out the reaction (S)-lactate(in) + H(+)(in) = (S)-lactate(out) + H(+)(out). It catalyses the reaction acetoacetate(out) + H(+)(out) = acetoacetate(in) + H(+)(in). The enzyme catalyses (R)-3-hydroxybutanoate(out) + H(+)(out) = (R)-3-hydroxybutanoate(in) + H(+)(in). The catalysed reaction is 4-methyl-2-oxopentanoate(out) + H(+)(out) = 4-methyl-2-oxopentanoate(in) + H(+)(in). It carries out the reaction pyruvate(out) + H(+)(out) = pyruvate(in) + H(+)(in). It catalyses the reaction (S)-3-hydroxybutanoate(out) + H(+)(out) = (S)-3-hydroxybutanoate(in) + H(+)(in). With respect to regulation, transport activity exhibits steep dependence on substrate concentration. Substrate concentration sensitivity of SLC16A7 arises from the strong inter-subunit cooperativity of the SLC16A7 dimer during transport. Inhibited by AR-C155858. Proton-coupled monocarboxylate symporter. Catalyzes the rapid transport across the plasma membrane of monocarboxylates such as L-lactate, pyruvate and ketone bodies, acetoacetate, beta-hydroxybutyrate and acetate. Dimerization is functionally required and both subunits work cooperatively in transporting substrate. This chain is Monocarboxylate transporter 2 (Slc16a7), found in Rattus norvegicus (Rat).